We begin with the raw amino-acid sequence, 477 residues long: ATP synthase subunit beta (477 aa).

Position 148–155 (148–155 (GGAGVGKT)) interacts with ATP.

Belongs to the ATPase alpha/beta chains family. In terms of assembly, F-type ATPases have 2 components, CF(1) - the catalytic core - and CF(0) - the membrane proton channel. CF(1) has five subunits: alpha(3), beta(3), gamma(1), delta(1), epsilon(1). CF(0) has three main subunits: a(1), b(2) and c(9-12). The alpha and beta chains form an alternating ring which encloses part of the gamma chain. CF(1) is attached to CF(0) by a central stalk formed by the gamma and epsilon chains, while a peripheral stalk is formed by the delta and b chains.

It localises to the cell inner membrane. The catalysed reaction is ATP + H2O + 4 H(+)(in) = ADP + phosphate + 5 H(+)(out). In terms of biological role, produces ATP from ADP in the presence of a proton gradient across the membrane. The catalytic sites are hosted primarily by the beta subunits. The chain is ATP synthase subunit beta from Psychrobacter arcticus (strain DSM 17307 / VKM B-2377 / 273-4).